Consider the following 499-residue polypeptide: Protein adenylyltransferase Fic (499 aa).

Residues 38–58 (FHYFVIFASGSLFSGLMFGLL) traverse the membrane as a helical segment. 2 TPR repeats span residues 126–159 (ALSS…SPKH) and 160–194 (PEIL…NPSH). An Inhibitory (S/T)XXXE(G/N) motif motif is present at residues 251–256 (SVGIEG). ATP is bound by residues E255 and 337–340 (VGGH). The 136-residue stretch at 306–441 (ITLKDILEIH…IRPFVRFIAD (136 aa)) folds into the Fido domain. The active site involves H384. ATP contacts are provided by residues 388 to 395 (DGNGRTSR), 420 to 421 (YY), and N428.

Belongs to the fic family. As to quaternary structure, homodimer.

Its subcellular location is the membrane. The enzyme catalyses L-tyrosyl-[protein] + ATP = O-(5'-adenylyl)-L-tyrosyl-[protein] + diphosphate. The catalysed reaction is L-threonyl-[protein] + ATP = 3-O-(5'-adenylyl)-L-threonyl-[protein] + diphosphate. It catalyses the reaction 3-O-(5'-adenylyl)-L-threonyl-[protein] + H2O = L-threonyl-[protein] + AMP + H(+). The side chain of Glu-255 determines which of the two opposing activities (AMPylase or de-AMPylase) will take place. In response to endoplasmic reticulum stress, mediates de-AMPylase activity. Adenylyltransferase activity is inhibited by the inhibitory helix present at the N-terminus: Glu-255 binds ATP and competes with ATP-binding at Arg-395, thereby preventing adenylyltransferase activity. In unstressed cells, disengagement of Glu-255 promotes adenylyltransferase activity. Activation dissociates ATP-binding from Glu-255, allowing ordered binding of the entire ATP moiety with the alpha-phosphate in an orientation that is productive for accepting an incoming target hydroxyl side chain. Its function is as follows. Protein that can both mediate the addition of adenosine 5'-monophosphate (AMP) to specific residues of target proteins (AMPylation), and the removal of the same modification from target proteins (de-AMPylation), depending on the context. The side chain of Glu-255 determines which of the two opposing activities (AMPylase or de-AMPylase) will take place. Acts as a key regulator of the unfolded protein response (UPR) by mediating AMPylation or de-AMPylation of Hsc70-3/BiP. In unstressed cells, acts as an adenylyltransferase by mediating AMPylation of Hsc70-3/BiP at 'Thr-518', thereby inactivating it. In response to endoplasmic reticulum stress, acts as a phosphodiesterase by mediating removal of ATP (de-AMPylation) from Hsc70-3/BiP at 'Thr-518', leading to restore HSPA5/BiP activity. The polypeptide is Protein adenylyltransferase Fic (Aedes aegypti (Yellowfever mosquito)).